Here is a 220-residue protein sequence, read N- to C-terminus: MFDITPIRVFGTSSIGVFIATNNTVTFIPPDVPEKIDDAVRNTLRTSVARFTVARSPLLGIFTVVNDNGVLLPPLVLEEEVRLFKALGLNVDIINTKYTAISNLILAGNKVALVSPLLEPSARKVVADVLGVEVIVDTIAGNPLVGALAVLNSRGLLVAPEATDDDLKKLSEYFKVRVDVGTVNRGKSFLRGGIVVNDNGALVGDETAGPELMRMQQVLG.

The protein belongs to the eIF-6 family.

Its function is as follows. Binds to the 50S ribosomal subunit and prevents its association with the 30S ribosomal subunit to form the 70S initiation complex. This is Translation initiation factor 6 from Pyrobaculum aerophilum (strain ATCC 51768 / DSM 7523 / JCM 9630 / CIP 104966 / NBRC 100827 / IM2).